We begin with the raw amino-acid sequence, 760 residues long: Pentatricopeptide repeat-containing protein At1g20230 (760 aa).

PPR repeat units lie at residues 49–79, 80–114, 115–149, 150–180, 181–215, 216–250, 251–285, 286–316, 317–351, 352–386, 387–421, 422–452, 453–487, 488–523, and 524–554; these read DGYI…IPDP, TIYS…GLIP, DSHV…GLDM, DAFV…MSDK, DVVT…GIEA, NIVS…GFCP, DQVT…GLLK, DKCV…FEMM, EAGV…TMEL, NVVS…GVKP, NHVT…HLLD, NVHV…MPTK, NLVC…RLKP, DFIS…GIKP, and RLEH…MPFE. A type E motif region spans residues 559–634; sequence VWGALLNSCR…NPGCSWIQVK (76 aa). The segment at 635-665 is type E(+) motif; the sequence is NRVYTLLAGDKSHPQIDQITEKMDEISKEMR. The tract at residues 666-760 is type DYW motif; that stretch reads KSGHRPNLDF…DGICSCGDFW (95 aa).

This sequence belongs to the PPR family. PCMP-H subfamily.

The chain is Pentatricopeptide repeat-containing protein At1g20230 (PCMP-H21) from Arabidopsis thaliana (Mouse-ear cress).